Consider the following 310-residue polypeptide: Cytochrome f (310 aa).

Positions 1–27 (MRRLLSPLFAALIVGVTVLTAPSTSWA) are cleaved as a signal peptide. Heme contacts are provided by Tyr-28, Cys-48, Cys-51, and His-52. The chain crosses the membrane as a helical span at residues 277–297 (IYGLLAFFAAVALAQIMLVLK).

Belongs to the cytochrome f family. The 4 large subunits of the cytochrome b6-f complex are cytochrome b6, subunit IV (17 kDa polypeptide, PetD), cytochrome f and the Rieske protein, while the 4 small subunits are PetG, PetL, PetM and PetN. The complex functions as a dimer. Heme is required as a cofactor.

It localises to the cellular thylakoid membrane. In terms of biological role, component of the cytochrome b6-f complex, which mediates electron transfer between photosystem II (PSII) and photosystem I (PSI), cyclic electron flow around PSI, and state transitions. This Synechococcus sp. (strain WH7803) protein is Cytochrome f.